Reading from the N-terminus, the 284-residue chain is 1D-myo-inositol 2-acetamido-2-deoxy-alpha-D-glucopyranoside deacetylase (284 aa).

Positions 12, 15, and 146 each coordinate Zn(2+).

The protein belongs to the MshB deacetylase family. Zn(2+) serves as cofactor.

The enzyme catalyses 1D-myo-inositol 2-acetamido-2-deoxy-alpha-D-glucopyranoside + H2O = 1D-myo-inositol 2-amino-2-deoxy-alpha-D-glucopyranoside + acetate. Catalyzes the deacetylation of 1D-myo-inositol 2-acetamido-2-deoxy-alpha-D-glucopyranoside (GlcNAc-Ins) in the mycothiol biosynthesis pathway. The chain is 1D-myo-inositol 2-acetamido-2-deoxy-alpha-D-glucopyranoside deacetylase from Mycolicibacterium vanbaalenii (strain DSM 7251 / JCM 13017 / BCRC 16820 / KCTC 9966 / NRRL B-24157 / PYR-1) (Mycobacterium vanbaalenii).